The sequence spans 160 residues: Ribosomal RNA large subunit methyltransferase H (160 aa).

S-adenosyl-L-methionine is bound by residues leucine 76, glycine 108, and 127–132 (LGKMTW).

It belongs to the RNA methyltransferase RlmH family. Homodimer.

The protein resides in the cytoplasm. It catalyses the reaction pseudouridine(1915) in 23S rRNA + S-adenosyl-L-methionine = N(3)-methylpseudouridine(1915) in 23S rRNA + S-adenosyl-L-homocysteine + H(+). Its function is as follows. Specifically methylates the pseudouridine at position 1915 (m3Psi1915) in 23S rRNA. This Rhizobium leguminosarum bv. trifolii (strain WSM2304) protein is Ribosomal RNA large subunit methyltransferase H.